A 508-amino-acid polypeptide reads, in one-letter code: Erythropoietin receptor (508 aa).

Positions 1–24 are cleaved as a signal peptide; that stretch reads MDHLGASLWPQVGSLCLLLAGAAW. Topologically, residues 25-250 are extracellular; the sequence is APPPNLPDPK…SLLTPSDLDP (226 aa). Residues Cys-52 and Cys-62 are joined by a disulfide bond. The N-linked (GlcNAc...) asparagine glycan is linked to Asn-76. Cys-91 and Cys-107 are joined by a disulfide. The Fibronectin type-III domain maps to 147-247; sequence APVGLVARLA…EPVSLLTPSD (101 aa). The WSXWS motif signature appears at 233–237; the sequence is WSAWS. A helical membrane pass occupies residues 251-273; that stretch reads LILTLSLILVVILVLLTVLALLS. The Cytoplasmic segment spans residues 274–508; it reads HRRALKQKIW…PLPPSYVACS (235 aa). Lys-281 participates in a covalent cross-link: Glycyl lysine isopeptide (Lys-Gly) (interchain with G-Cter in ubiquitin). The short motif at 282 to 290 is the Box 1 motif element; sequence IWPGIPSPE. 2 positions are modified to phosphotyrosine; by JAK2: Tyr-368 and Tyr-426. The short motif at 452–457 is the ITIM motif element; that stretch reads LKYLYL. Lys-453 is covalently cross-linked (Glycyl lysine isopeptide (Lys-Gly) (interchain with G-Cter in ubiquitin)). A phosphotyrosine; by JAK2 mark is found at Tyr-454, Tyr-456, Tyr-468, Tyr-485, Tyr-489, and Tyr-504. The interval 454–456 is required for high-affinity SOCS3 binding; the sequence is YLY. Residues 467 to 494 form a disordered region; that stretch reads DYSSGDSQGAQGGLSDGPYSNPYENSLI.

This sequence belongs to the type I cytokine receptor family. Type 1 subfamily. In terms of assembly, forms homodimers on EPO stimulation. The tyrosine-phosphorylated form interacts with several SH2 domain-containing proteins including LYN, the adapter protein SH2B2, PTPN6, PTPN11, JAK2, PI3 kinases, STAT5A/B, SOCS3, CRKL. Interacts with INPP5D/SHIP1. SH2B2 binding inhibits the JAK-STAT signaling. Interacts with RHEX; this interaction occurs in a erythropoietin (EPO)-dependent manner. Interacts with ATXN2L. Post-translationally, on EPO stimulation, phosphorylated on C-terminal tyrosine residues by JAK2. The phosphotyrosine motifs are also recruitment sites for several SH2-containing proteins and adapter proteins which mediate cell proliferation. Phosphorylation on Tyr-454 is required for PTPN6 interaction, Tyr-426 for PTPN11. Tyr-426 is also required for SOCS3 binding, but Tyr-454/Tyr-456 motif is the preferred binding site. In terms of processing, ubiquitinated by the ECS(SOCS2) complex following ligand-binding and phosphorylation by JAK2, leading to its degradation by the proteasome. Regulation by the ECS(SOCS2) complex acts as a negative feedback loop of erythropoietin-mediated signaling pathway. Ubiquitination at Lys-281 mediates receptor internalization, whereas ubiquitination at Lys-453 promotes trafficking of activated receptors to the lysosomes for degradation. Ubiquitinated by NOSIP; appears to be either multi-monoubiquitinated or polyubiquitinated. Ubiquitination mediates proliferation and survival of EPO-dependent cells. In terms of tissue distribution, erythroid cells and erythroid progenitor cells. Isoform EPOR-F is the most abundant form in EPO-dependent erythroleukemia cells and in late-stage erythroid progenitors. As to expression, isoform EPOR-S and isoform EPOR-T are the predominant forms in bone marrow. In terms of tissue distribution, isoform EPOR-S and isoform EPOR-T are the predominant forms in bone marrow. Isoform EPOR-T is the most abundant from in early-stage erythroid progenitor cells.

The protein resides in the cell membrane. Its subcellular location is the secreted. In terms of biological role, receptor for erythropoietin, which mediates erythropoietin-induced erythroblast proliferation and differentiation. Upon EPO stimulation, EPOR dimerizes triggering the JAK2/STAT5 signaling cascade. In some cell types, can also activate STAT1 and STAT3. May also activate the LYN tyrosine kinase. Its function is as follows. Acts as a dominant-negative receptor of EPOR-mediated signaling. The protein is Erythropoietin receptor of Homo sapiens (Human).